The sequence spans 359 residues: Protein mab-21-like 2-A (359 aa).

The protein belongs to the mab-21 family.

Its subcellular location is the nucleus. The protein localises to the cytoplasm. In terms of biological role, required for normal development of the eye. May promote dorsalization of the developing embryo by antagonizing the ventralizing factor bmp4. Functional antagonism of bmp4 may require interaction with smad1. Required for gastrulation and subsequent neural development. May function as a transcriptional repressor. The protein is Protein mab-21-like 2-A (mab21l2-a) of Xenopus laevis (African clawed frog).